Here is an 834-residue protein sequence, read N- to C-terminus: Striatin-interacting protein 2 (834 aa).

A disordered region spans residues 1–48; the sequence is MEDPAAPGTGGPPANGNGNGGGKGKQAAPKGREAFRSQRRESEGSVDC. Gly residues predominate over residues 8-24; that stretch reads GTGGPPANGNGNGGGKG. Positions 30–43 are enriched in basic and acidic residues; sequence KGREAFRSQRRESE. 3 positions are modified to phosphoserine: serine 318, serine 329, and serine 354. The segment at 321 to 345 is disordered; it reads SYTLDLGESQLAPPPSKLRGRRGSR. The tract at residues 360 to 382 is disordered; it reads ERDLFKTEEPATEEEEESAGDGE. The span at 369–379 shows a compositional bias: acidic residues; it reads PATEEEEESAG.

This sequence belongs to the STRIP family. Part of the core of STRIPAK complexes composed of PP2A catalytic and scaffolding subunits, the striatins (PP2A regulatory subunits), the striatin-associated proteins MOB4, STRIP1 and STRIP2, PDCD10 and members of the STE20 kinases, such as STK24 and STK26. Interacts with CTTNBP2NL.

The protein localises to the cytoplasm. Plays a role in the regulation of cell morphology and cytoskeletal organization. Required in the control of cell shape. Calmodulin-binding scaffolding protein which is the center of the striatin-interacting phosphatase and kinase (STRIPAK) complexes. STRIPAK complexes have critical roles in protein (de)phosphorylation and are regulators of multiple signaling pathways including Hippo, MAPK, nuclear receptor and cytoskeleton remodeling. Different types of STRIPAK complexes are involved in a variety of biological processes such as cell growth, differentiation, apoptosis, metabolism and immune regulation. The polypeptide is Striatin-interacting protein 2 (Homo sapiens (Human)).